The sequence spans 249 residues: Tumor necrosis factor ligand superfamily member 12 (249 aa).

Topologically, residues 1-21 (MAARRSQRRRGRRGEPGTALL) are cytoplasmic. The chain crosses the membrane as a helical; Signal-anchor for type II membrane protein span at residues 22-42 (VPLALGLGLALACLGLLLAVV). Residues 43-249 (SLGSRASLSA…LTYFGLFQVH (207 aa)) lie on the Extracellular side of the membrane. The disordered stretch occupies residues 55-85 (PAQEELVAEEDQDPSELNPQTEESQDPAPFL). Residues 56-68 (AQEELVAEEDQDP) are compositionally biased toward acidic residues. Positions 107-248 (IAAHYEVHPR…FLTYFGLFQV (142 aa)) constitute a THD domain. N-linked (GlcNAc...) asparagine glycosylation occurs at Asn-139. The cysteines at positions 191 and 210 are disulfide-linked.

It belongs to the tumor necrosis factor family. In terms of assembly, homotrimer. Interacts with the angiogenic factor AGGF1/VG5Q. Post-translationally, the soluble form derives from the membrane form by proteolytic processing. Highly expressed in adult heart, pancreas, skeletal muscle, brain, colon, small intestine, lung, ovary, prostate, spleen, lymph node, appendix and peripheral blood lymphocytes. Low expression in kidney, testis, liver, placenta, thymus and bone marrow. Also detected in fetal kidney, liver, lung and brain.

Its subcellular location is the cell membrane. It is found in the secreted. Functionally, binds to FN14 and possibly also to TNRFSF12/APO3. Weak inducer of apoptosis in some cell types. Mediates NF-kappa-B activation. Promotes angiogenesis and the proliferation of endothelial cells. Also involved in induction of inflammatory cytokines. Promotes IL8 secretion. In Homo sapiens (Human), this protein is Tumor necrosis factor ligand superfamily member 12 (TNFSF12).